The chain runs to 275 residues: Large ribosomal subunit protein uL2 (275 aa).

The tract at residues 221–275 is disordered; the sequence is RGTAMNPVDHPHGGGEGRTGEGRVPVNPWGQPTKGYRTRSNKRTNSMIVQRRHKR. A compositionally biased stretch (basic and acidic residues) spans 229–241; the sequence is DHPHGGGEGRTGE.

This sequence belongs to the universal ribosomal protein uL2 family. As to quaternary structure, part of the 50S ribosomal subunit. Forms a bridge to the 30S subunit in the 70S ribosome.

In terms of biological role, one of the primary rRNA binding proteins. Required for association of the 30S and 50S subunits to form the 70S ribosome, for tRNA binding and peptide bond formation. It has been suggested to have peptidyltransferase activity; this is somewhat controversial. Makes several contacts with the 16S rRNA in the 70S ribosome. This Dechloromonas aromatica (strain RCB) protein is Large ribosomal subunit protein uL2.